The chain runs to 640 residues: Chaperone protein DnaK (640 aa).

T196 carries the phosphothreonine; by autocatalysis modification. Disordered stretches follow at residues 487-526 (GKEQ…KEEI) and 593-640 (SHLY…GNDK). Positions 501–526 (TDAEISKMKEDAKEHAAEDQKRKEEI) are enriched in basic and acidic residues. Positions 595-613 (LYQSQGPESSQPETAAQSD) are enriched in polar residues. Residues 630 to 640 (AEYEVIDGNDK) are compositionally biased toward acidic residues.

Belongs to the heat shock protein 70 family.

Acts as a chaperone. The chain is Chaperone protein DnaK from Pelodictyon phaeoclathratiforme (strain DSM 5477 / BU-1).